Reading from the N-terminus, the 393-residue chain is MAAVTVEEIRKAQRADGPAAVLAIGTATPANYVTQADYPDYYFRITKSEHMTELKEKFKRMCDKSMIRKRYMYLTEDILKENPNMCAYMAPSLDARQDIVVVEVPKLGKEAAVKAIKEWGQPKSKITHLIFCTTSGVDMPGCDYQLTKLLGLRPSVKRFMMYQQGCFAGGTVLRLAKDLAENNRGARVLVVCSEITAVTFRGPADTHLDSLVGQALFGDGAAAVIVGADPNESIERPLYQLVSAAQTILPDSDGAIDGHLREVGLTFHLLKDVPGLISKNIEKSLKEAFGPIGISDWNSIFWIAHPGGPAILDQVEAKLGLKEEKLRATRQVLSEYGNMSSACVLFILDEMRKKCAEEGRATTGEGLDWGVLFGFGPGLTVETVVLRSVPINA.

Residue cysteine 166 is part of the active site.

Belongs to the thiolase-like superfamily. Chalcone/stilbene synthases family.

The catalysed reaction is (E)-4-coumaroyl-CoA + 3 malonyl-CoA + 3 H(+) = 2',4,4',6'-tetrahydroxychalcone + 3 CO2 + 4 CoA. It functions in the pathway secondary metabolite biosynthesis; flavonoid biosynthesis. The primary product of this enzyme is 4,2',4',6'-tetrahydroxychalcone (also termed naringenin-chalcone or chalcone) which can under specific conditions spontaneously isomerize into naringenin. This chain is Chalcone synthase 2 (CHS2), found in Ruta graveolens (Common rue).